A 733-amino-acid chain; its full sequence is Catalase-peroxidase (733 aa).

A disordered region spans residues 1–25; it reads MNEERKCPITGATHKPSAEKGRSNH. A compositionally biased stretch (basic and acidic residues) spans 16 to 25; sequence PSAEKGRSNH. Positions 96-219 form a cross-link, tryptophyl-tyrosyl-methioninium (Trp-Tyr) (with M-245); the sequence is WHSAGTYRTS…LAAVQMGLIY (124 aa). The active-site Proton acceptor is the His97. Positions 219–245 form a cross-link, tryptophyl-tyrosyl-methioninium (Tyr-Met) (with W-96); the sequence is YVNPEGPNGKPDPLAAAKDIRETFARM. A heme b-binding site is contributed by His260.

Belongs to the peroxidase family. Peroxidase/catalase subfamily. As to quaternary structure, homodimer or homotetramer. Requires heme b as cofactor. Post-translationally, formation of the three residue Trp-Tyr-Met cross-link is important for the catalase, but not the peroxidase activity of the enzyme.

The enzyme catalyses H2O2 + AH2 = A + 2 H2O. The catalysed reaction is 2 H2O2 = O2 + 2 H2O. Its function is as follows. Bifunctional enzyme with both catalase and broad-spectrum peroxidase activity. The protein is Catalase-peroxidase of Chlorobium chlorochromatii (strain CaD3).